Reading from the N-terminus, the 647-residue chain is Threonine--tRNA ligase (647 aa).

A TGS domain is found at 1–61 (MIKITFPDGA…EEDGSIEIVT (61 aa)). The tract at residues 240–538 (DHRKLGKELD…LIETYKGAFP (299 aa)) is catalytic. Zn(2+) contacts are provided by C334, H385, and H515.

Belongs to the class-II aminoacyl-tRNA synthetase family. Homodimer. Zn(2+) serves as cofactor.

It localises to the cytoplasm. It carries out the reaction tRNA(Thr) + L-threonine + ATP = L-threonyl-tRNA(Thr) + AMP + diphosphate + H(+). Catalyzes the attachment of threonine to tRNA(Thr) in a two-step reaction: L-threonine is first activated by ATP to form Thr-AMP and then transferred to the acceptor end of tRNA(Thr). Also edits incorrectly charged L-seryl-tRNA(Thr). This chain is Threonine--tRNA ligase, found in Streptococcus pyogenes serotype M2 (strain MGAS10270).